Reading from the N-terminus, the 384-residue chain is Succinyl-diaminopimelate desuccinylase (384 aa).

H72 provides a ligand contact to Zn(2+). D74 is an active-site residue. D105 serves as a coordination point for Zn(2+). Catalysis depends on E139, which acts as the Proton acceptor. Zn(2+)-binding residues include E140, E168, and H355.

Belongs to the peptidase M20A family. DapE subfamily. As to quaternary structure, homodimer. Requires Zn(2+) as cofactor. Co(2+) is required as a cofactor.

The enzyme catalyses N-succinyl-(2S,6S)-2,6-diaminopimelate + H2O = (2S,6S)-2,6-diaminopimelate + succinate. The protein operates within amino-acid biosynthesis; L-lysine biosynthesis via DAP pathway; LL-2,6-diaminopimelate from (S)-tetrahydrodipicolinate (succinylase route): step 3/3. Its function is as follows. Catalyzes the hydrolysis of N-succinyl-L,L-diaminopimelic acid (SDAP), forming succinate and LL-2,6-diaminopimelate (DAP), an intermediate involved in the bacterial biosynthesis of lysine and meso-diaminopimelic acid, an essential component of bacterial cell walls. The chain is Succinyl-diaminopimelate desuccinylase from Blochmanniella pennsylvanica (strain BPEN).